Reading from the N-terminus, the 686-residue chain is Putative pentatricopeptide repeat-containing protein At3g49142 (686 aa).

12 PPR repeats span residues 73–103 (NSSL…IPER), 104–138 (NVII…NVRP), 139–173 (DHYT…GLSS), 174–204 (TLFV…MSRR), 205–239 (DVVS…KISH), 240–272 (DAGT…MGKK), 273–307 (SLVS…GFEP), 308–342 (DAVS…KLIP), 343–373 (NLLL…MKSR), 374–408 (DVVS…GLVP), 409–439 (DSIA…MTDH), and 445–475 (RLEH…MSME). The interval 480–555 (VWGALLGACR…NPGASNVEVN (76 aa)) is type E motif. A type E(+) motif region spans residues 556–586 (RIIHTFLVGDRSHPQSDEIYRELDVLVKKMK). The interval 587 to 686 (ELGYVPDSES…FGVCSCGDYW (100 aa)) is type DYW motif.

The protein belongs to the PPR family. PCMP-H subfamily.

In Arabidopsis thaliana (Mouse-ear cress), this protein is Putative pentatricopeptide repeat-containing protein At3g49142 (PCMP-H77).